The chain runs to 130 residues: Protein ApaG (130 aa).

The 125-residue stretch at 3–127 folds into the ApaG domain; that stretch reads RALTRDIEVT…FSLDSPGLVR (125 aa).

The protein is Protein ApaG of Rhizobium meliloti (strain 1021) (Ensifer meliloti).